A 378-amino-acid polypeptide reads, in one-letter code: Mannitol-1-phosphate 5-dehydrogenase (378 aa).

NAD(+) is bound at residue 4–15 (SVHFGAGNIGRG).

Belongs to the mannitol dehydrogenase family.

The enzyme catalyses D-mannitol 1-phosphate + NAD(+) = beta-D-fructose 6-phosphate + NADH + H(+). The chain is Mannitol-1-phosphate 5-dehydrogenase from Streptococcus pneumoniae (strain ATCC BAA-255 / R6).